The chain runs to 372 residues: Recombinase Flp protein (372 aa).

The Tyr recombinase Flp-type domain occupies 85–367 (GGHNAVAEEI…EYVHSYAMGK (283 aa)). Residue tyrosine 292 is the O-(3'-phospho-DNA)-tyrosine intermediate of the active site.

Belongs to the 'phage' integrase family.

Catalyzes the recombination between the large inverted repetitions of the plasmid. This Lachancea fermentati (Zygosaccharomyces fermentati) protein is Recombinase Flp protein.